The primary structure comprises 234 residues: Endonuclease V (234 aa).

The Mg(2+) site is built by Asp36 and Asp104.

The protein belongs to the endonuclease V family. The cofactor is Mg(2+).

The protein resides in the cytoplasm. It carries out the reaction Endonucleolytic cleavage at apurinic or apyrimidinic sites to products with a 5'-phosphate.. Its function is as follows. DNA repair enzyme involved in the repair of deaminated bases. Selectively cleaves double-stranded DNA at the second phosphodiester bond 3' to a deoxyinosine leaving behind the intact lesion on the nicked DNA. The chain is Endonuclease V from Yersinia pestis.